The sequence spans 453 residues: Enolase (453 aa).

Q163 contributes to the (2R)-2-phosphoglycerate binding site. Catalysis depends on E205, which acts as the Proton donor. Residues D258, E308, and D335 each contribute to the Mg(2+) site. (2R)-2-phosphoglycerate contacts are provided by K360, R389, S390, and K411. The active-site Proton acceptor is K360.

Belongs to the enolase family. It depends on Mg(2+) as a cofactor.

It localises to the cytoplasm. The protein localises to the secreted. Its subcellular location is the cell surface. It carries out the reaction (2R)-2-phosphoglycerate = phosphoenolpyruvate + H2O. Its pathway is carbohydrate degradation; glycolysis; pyruvate from D-glyceraldehyde 3-phosphate: step 4/5. Catalyzes the reversible conversion of 2-phosphoglycerate (2-PG) into phosphoenolpyruvate (PEP). It is essential for the degradation of carbohydrates via glycolysis. This Mesoplasma florum (strain ATCC 33453 / NBRC 100688 / NCTC 11704 / L1) (Acholeplasma florum) protein is Enolase.